A 447-amino-acid chain; its full sequence is N-succinylarginine dihydrolase (447 aa).

Residues 19-28 (AGLSFGNEAS), Asn-110, and 137-138 (HR) each bind substrate. Glu-174 is an active-site residue. Residue Arg-212 coordinates substrate. The active site involves His-248. Asp-250 and Asn-359 together coordinate substrate. The Nucleophile role is filled by Cys-365.

This sequence belongs to the succinylarginine dihydrolase family. Homodimer.

The catalysed reaction is N(2)-succinyl-L-arginine + 2 H2O + 2 H(+) = N(2)-succinyl-L-ornithine + 2 NH4(+) + CO2. Its pathway is amino-acid degradation; L-arginine degradation via AST pathway; L-glutamate and succinate from L-arginine: step 2/5. Catalyzes the hydrolysis of N(2)-succinylarginine into N(2)-succinylornithine, ammonia and CO(2). The chain is N-succinylarginine dihydrolase from Escherichia coli O6:K15:H31 (strain 536 / UPEC).